Reading from the N-terminus, the 163-residue chain is Nucleotide-binding protein PM1656 (163 aa).

Belongs to the YajQ family.

Its function is as follows. Nucleotide-binding protein. This Pasteurella multocida (strain Pm70) protein is Nucleotide-binding protein PM1656.